The sequence spans 111 residues: Large ribosomal subunit protein eL31 (111 aa).

The protein belongs to the eukaryotic ribosomal protein eL31 family.

The chain is Large ribosomal subunit protein eL31 (rpl31) from Dictyostelium discoideum (Social amoeba).